The following is a 317-amino-acid chain: Small ribosomal subunit protein RACK1 (317 aa).

WD repeat units follow at residues 13–44 (GHSG…IMWK), 61–91 (GHSH…RLWD), 103–133 (GHTK…KLWN), 146–178 (GHTE…KVWN), 190–220 (GHTG…MLWD), 231–260 (DSGD…KIWD), and 281–311 (AEPP…RVWQ).

Belongs to the WD repeat G protein beta family. Ribosomal protein RACK1 subfamily.

Its subcellular location is the cytoplasm. Functionally, involved in the recruitment, assembly and/or regulation of a variety of signaling molecules. Interacts with a wide variety of proteins and plays a role in many cellular processes. Required for VANGL2 membrane localization, inhibits Wnt signaling and regulates cellular polarization and oriented cell division during gastrulation. This is Small ribosomal subunit protein RACK1 (gnb2l1) from Oreochromis niloticus (Nile tilapia).